A 354-amino-acid chain; its full sequence is Sulfate/thiosulfate import ATP-binding protein CysA (354 aa).

An ABC transporter domain is found at 3–237 (IEVRGLSKRF…PATPFVYGFL (235 aa)). 35-42 (GPSGCGKT) is a binding site for ATP.

This sequence belongs to the ABC transporter superfamily. Sulfate/tungstate importer (TC 3.A.1.6) family. The complex is composed of two ATP-binding proteins (CysA), two transmembrane proteins (CysT and CysW) and a solute-binding protein (CysP).

It localises to the cell inner membrane. It catalyses the reaction sulfate(out) + ATP + H2O = sulfate(in) + ADP + phosphate + H(+). The enzyme catalyses thiosulfate(out) + ATP + H2O = thiosulfate(in) + ADP + phosphate + H(+). Part of the ABC transporter complex CysAWTP involved in sulfate/thiosulfate import. Responsible for energy coupling to the transport system. This is Sulfate/thiosulfate import ATP-binding protein CysA from Bordetella parapertussis (strain 12822 / ATCC BAA-587 / NCTC 13253).